Consider the following 243-residue polypeptide: Thaumatin-like protein (243 aa).

An N-terminal signal peptide occupies residues 1-20 (MASINLFLFAFLLLLSHASA). 8 disulfide bridges follow: cysteine 29–cysteine 238, cysteine 77–cysteine 87, cysteine 92–cysteine 98, cysteine 144–cysteine 228, cysteine 149–cysteine 211, cysteine 157–cysteine 174, cysteine 178–cysteine 187, and cysteine 188–cysteine 198.

This sequence belongs to the thaumatin family.

The chain is Thaumatin-like protein from Arabidopsis thaliana (Mouse-ear cress).